The sequence spans 227 residues: Cytidylate kinase (227 aa).

12–20 (GPSGAGKGT) contacts ATP.

This sequence belongs to the cytidylate kinase family. Type 1 subfamily.

The protein localises to the cytoplasm. It catalyses the reaction CMP + ATP = CDP + ADP. The catalysed reaction is dCMP + ATP = dCDP + ADP. The sequence is that of Cytidylate kinase from Salmonella choleraesuis (strain SC-B67).